A 245-amino-acid polypeptide reads, in one-letter code: Myelin protein P0 (245 aa).

The first 28 residues, 1-28 (MEPSGLRTPCSLLALVLLSALVLTPTLA), serve as a signal peptide directing secretion. The 115-residue stretch at 29–143 (IEVYTDREVY…VGKSSYVHLQ (115 aa)) folds into the Ig-like V-type domain. Topologically, residues 29–153 (IEVYTDREVY…VQEKGPARAG (125 aa)) are extracellular. The cysteines at positions 49 and 125 are disulfide-linked. Asn120 carries an N-linked (GlcNAc...) asparagine glycan. The helical transmembrane segment at 154–174 (LILGIIIAVALALVIVVTILI) threads the bilayer. Topologically, residues 175–245 (LLIRYCWLRR…GIGDSRKDRK (71 aa)) are cytoplasmic. Basic and acidic residues-rich tracts occupy residues 199 to 208 (KLHKAKDSSK) and 224 to 245 (TRGK…KDRK). The tract at residues 199 to 245 (KLHKAKDSSKRSSRQTPILYAMLDQTRGKSSEKKAKGGIGDSRKDRK) is disordered.

Belongs to the myelin P0 protein family.

It localises to the cell membrane. Its function is as follows. Creation of an extracellular membrane face which guides the wrapping process and ultimately compacts adjacent lamellae. This Xenopus laevis (African clawed frog) protein is Myelin protein P0 (mpz).